The sequence spans 157 residues: Small ribosomal subunit protein uS7 (157 aa).

This sequence belongs to the universal ribosomal protein uS7 family. Part of the 30S ribosomal subunit. Contacts proteins S9 and S11.

Functionally, one of the primary rRNA binding proteins, it binds directly to 16S rRNA where it nucleates assembly of the head domain of the 30S subunit. Is located at the subunit interface close to the decoding center, probably blocks exit of the E-site tRNA. In Pseudomonas fluorescens (strain Pf0-1), this protein is Small ribosomal subunit protein uS7.